We begin with the raw amino-acid sequence, 189 residues long: Peptidyl-tRNA hydrolase (189 aa).

Tyr17 is a binding site for tRNA. His22 serves as the catalytic Proton acceptor. Phe65, Asn67, and Asn113 together coordinate tRNA.

The protein belongs to the PTH family. In terms of assembly, monomer.

The protein resides in the cytoplasm. The enzyme catalyses an N-acyl-L-alpha-aminoacyl-tRNA + H2O = an N-acyl-L-amino acid + a tRNA + H(+). Hydrolyzes ribosome-free peptidyl-tRNAs (with 1 or more amino acids incorporated), which drop off the ribosome during protein synthesis, or as a result of ribosome stalling. Its function is as follows. Catalyzes the release of premature peptidyl moieties from peptidyl-tRNA molecules trapped in stalled 50S ribosomal subunits, and thus maintains levels of free tRNAs and 50S ribosomes. The sequence is that of Peptidyl-tRNA hydrolase from Mycoplasma genitalium (strain ATCC 33530 / DSM 19775 / NCTC 10195 / G37) (Mycoplasmoides genitalium).